A 280-amino-acid chain; its full sequence is Cell division control protein 2 homolog B (280 aa).

ATP contacts are provided by residues 1–5 (AYGVV) and lysine 20. Residues 1–274 (AYGVVYKARD…AKKALEHEYF (274 aa)) form the Protein kinase domain. A Phosphotyrosine modification is found at tyrosine 2. Residue aspartate 114 is the Proton acceptor of the active site. Position 148 is a phosphothreonine; by CAK (threonine 148).

Belongs to the protein kinase superfamily. CMGC Ser/Thr protein kinase family. CDC2/CDKX subfamily.

The enzyme catalyses L-seryl-[protein] + ATP = O-phospho-L-seryl-[protein] + ADP + H(+). It catalyses the reaction L-threonyl-[protein] + ATP = O-phospho-L-threonyl-[protein] + ADP + H(+). The catalysed reaction is [DNA-directed RNA polymerase] + ATP = phospho-[DNA-directed RNA polymerase] + ADP + H(+). Phosphorylation at Tyr-2 inactivates the enzyme, while phosphorylation at Thr-148 activates it. Its function is as follows. Plays a key role in the control of the eukaryotic cell cycle. The polypeptide is Cell division control protein 2 homolog B (CDC2B) (Antirrhinum majus (Garden snapdragon)).